Reading from the N-terminus, the 283-residue chain is Prolyl 4-hydroxylase 1 (283 aa).

At 1-6 the chain is on the cytoplasmic side; the sequence is MAPAMK. A helical; Signal-anchor for type II membrane protein transmembrane segment spans residues 7–27; the sequence is IVFGLLTFVTVGMVIGSLLQL. Residues 28-283 lie on the Lumenal side of the membrane; sequence AFINRLEDSY…TKWMRQKATS (256 aa). In terms of domain architecture, Fe2OG dioxygenase spans 162–279; that stretch reads NGELIQVLRY…KWSATKWMRQ (118 aa). The Fe cation site is built by His180, Asp182, and His260. Residue Lys270 participates in 2-oxoglutarate binding.

Belongs to the P4HA family. It depends on Fe(2+) as a cofactor. The cofactor is L-ascorbate.

It localises to the endoplasmic reticulum membrane. It catalyses the reaction L-prolyl-[collagen] + 2-oxoglutarate + O2 = trans-4-hydroxy-L-prolyl-[collagen] + succinate + CO2. Functionally, catalyzes the post-translational formation of 4-hydroxyproline in -Xaa-Pro-Gly- sequences in proline-rich peptide sequences of plant glycoproteins and other proteins. Hydroxylates preferentially prolines in second positions in the -Pro-Pro-Gly-triplets. Hydroxyprolines are important constituent of many plant cell wall glycoproteins such as extensins, hydroxyproline-rich glycoproteins, lectins and arabinogalactan proteins. Can hydroxylate collagen-like peptides and hypoxia-inducible transcription factor peptides. In Arabidopsis thaliana (Mouse-ear cress), this protein is Prolyl 4-hydroxylase 1.